The chain runs to 350 residues: MAIEQHIDGLLRHVGLRVDHGLTPVSASLVLLAGIGALSVGTFALRLVRLFADVYILPGNSVSKYGANKKDLTRASWAVVTGATDGIGREFALQLARKGFNIVLVSRSPEKLGSVAAEIEAATPGVRTKTQAIDFALGDERQYEGLEHTVKGLNVGVLVNNVGKSHNMPVTFTETSEEEMEDIIEINVVSVLRVSKMIIPGMVDRKRGLVLNLGSFAGQVTTPMLATYAGSKAFLSGWSQALGEEVKRSNVDVSLLNTYFVVSNLSKIRKSSAMIPTPKQYVTQVLKTLGRNGGAVGRPYTATPWPGHALVDWATTFVLPRGWLLSYTYGQQVATRKRALNKAHKAVKSA.

The helical transmembrane segment at 28–48 threads the bilayer; that stretch reads SLVLLAGIGALSVGTFALRLV. 8 residues coordinate NADP(+): valine 79, aspartate 134, asparagine 161, lysine 196, tyrosine 228, lysine 232, valine 261, and serine 263. The Proton donor role is filled by tyrosine 228. The Lowers pKa of active site Tyr role is filled by lysine 232.

It belongs to the short-chain dehydrogenases/reductases (SDR) family.

The protein localises to the endoplasmic reticulum membrane. It carries out the reaction a very-long-chain (3R)-3-hydroxyacyl-CoA + NADP(+) = a very-long-chain 3-oxoacyl-CoA + NADPH + H(+). Its pathway is lipid metabolism; fatty acid biosynthesis. In terms of biological role, component of the microsomal membrane bound fatty acid elongation system, which produces the 26-carbon very long-chain fatty acids (VLCFA) from palmitate. Catalyzes the reduction of the 3-ketoacyl-CoA intermediate that is formed in each cycle of fatty acid elongation. VLCFAs serve as precursors for ceramide and sphingolipids. The chain is Very-long-chain 3-oxoacyl-CoA reductase from Mycosarcoma maydis (Corn smut fungus).